Here is a 232-residue protein sequence, read N- to C-terminus: Eukaryotic translation initiation factor NCBP (232 aa).

The segment covering 1 to 11 (MEPAVERKVPE) has biased composition (basic and acidic residues). Residues 1–49 (MEPAVERKVPEQEEQLQPSHARAEDAPPAAVEEEDEAEAEESERRNREL) form a disordered region. A compositionally biased stretch (acidic residues) spans 31–41 (VEEEDEAEAEE).

It belongs to the eukaryotic initiation factor 4E family. As to quaternary structure, EIF4F is a multi-subunit complex, the composition of which varies with external and internal environmental conditions. It is composed of at least EIF4A, EIF4E and EIF4G. EIF4E is also known to interact with other partners. In higher plants two isoforms of EIF4F have been identified, named isoform EIF4F and isoform EIF(iso)4F. Isoform EIF4F has subunits p220 and p26, whereas isoform EIF(iso)4F has subunits p82 and p28.

In terms of biological role, recognizes and binds the 7-methylguanosine-containing mRNA cap during an early step in the initiation of protein synthesis and facilitates ribosome binding by inducing the unwinding of the mRNAs secondary structures. In Triticum aestivum (Wheat), this protein is Eukaryotic translation initiation factor NCBP (NCBP).